Reading from the N-terminus, the 204-residue chain is Small ribosomal subunit protein uS7 (204 aa).

This sequence belongs to the universal ribosomal protein uS7 family. As to quaternary structure, part of the 30S ribosomal subunit.

Functionally, one of the primary rRNA binding proteins, it binds directly to 16S rRNA where it nucleates assembly of the head domain of the 30S subunit. Is located at the subunit interface close to the decoding center. The polypeptide is Small ribosomal subunit protein uS7 (Methanoregula boonei (strain DSM 21154 / JCM 14090 / 6A8)).